We begin with the raw amino-acid sequence, 245 residues long: Geranylgeranylglyceryl phosphate synthase (245 aa).

Asp20 and Ser50 together coordinate Mg(2+). Sn-glycerol 1-phosphate is bound by residues 169 to 175 (YLEAGSG), 202 to 203 (GG), and 224 to 225 (GT).

Belongs to the GGGP/HepGP synthase family. Group II subfamily. Mg(2+) serves as cofactor.

Its subcellular location is the cytoplasm. The catalysed reaction is sn-glycerol 1-phosphate + (2E,6E,10E)-geranylgeranyl diphosphate = sn-3-O-(geranylgeranyl)glycerol 1-phosphate + diphosphate. It participates in membrane lipid metabolism; glycerophospholipid metabolism. Prenyltransferase that catalyzes the transfer of the geranylgeranyl moiety of geranylgeranyl diphosphate (GGPP) to the C3 hydroxyl of sn-glycerol-1-phosphate (G1P). This reaction is the first ether-bond-formation step in the biosynthesis of archaeal membrane lipids. The sequence is that of Geranylgeranylglyceryl phosphate synthase from Ignicoccus hospitalis (strain KIN4/I / DSM 18386 / JCM 14125).